We begin with the raw amino-acid sequence, 387 residues long: Odorant receptor 19a (387 aa).

At 1-40 (MDISKVDSTRALVNHWRIFRIMGIHPPGKRTFWGRHYTAY) the chain is on the cytoplasmic side. Residues 41 to 61 (SMVWNVTFHICIWVSFSVNLL) form a helical membrane-spanning segment. Residues 62–71 (QSNSLETFCE) are Extracellular-facing. Residues 72–92 (SLCVTMPHTLYMLKLINVRRM) traverse the membrane as a helical segment. Over 93-127 (RGQMISSHWLLRLLDKRLGCDDERQIIMAGIERAE) the chain is Cytoplasmic. The chain crosses the membrane as a helical span at residues 128–148 (FIFRTIFRGLACTVVLGIIYI). Topologically, residues 149–171 (SASSEPTLMYPTWIPWNWRDSTS) are extracellular. Residues 172 to 192 (AYLATAMLHTTALMANATLVL) form a helical membrane-spanning segment. Residues 193-254 (NLSSYPGTYL…LRLFKSLERS (62 aa)) are Cytoplasmic-facing. The chain crosses the membrane as a helical span at residues 255–275 (LSMTCFLQFFSTACAQCTICY). The Extracellular segment spans residues 276 to 285 (FLLFGNVGIM). Residues 286–306 (RFMNMLFLLVILTTETLLLCY) form a helical membrane-spanning segment. At 307–336 (TAELPCKEGESLLTAVYSCNWLSQSVNFRR) the chain is on the cytoplasmic side. Residues 337–357 (LLLLMLARCQIPMILVSGVIV) traverse the membrane as a helical segment. Residues 358-387 (PISMKTFTVMIKGAYTMLTLLNEIRKTSLE) are Extracellular-facing.

It belongs to the insect chemoreceptor superfamily. Heteromeric odorant receptor channel (TC 1.A.69) family. Or2a subfamily. Interacts with Orco. Complexes exist early in the endomembrane system in olfactory sensory neurons (OSNs), coupling these complexes to the conserved ciliary trafficking pathway. Expressed in ai2A olfactory sensory neurons in the antenna.

It localises to the cell membrane. Functionally, odorant receptor which mediates acceptance or avoidance behavior, depending on its substrates. The odorant receptor repertoire encodes a large collection of odor stimuli that vary widely in identity, intensity, and duration. May form a complex with Orco to form odorant-sensing units, providing sensitive and prolonged odorant signaling and calcium permeability. Involved in the preference for citrus fruits for oviposition, especially through the response to valencene, the primary ligand of Or19a. Larvae growing on citrus fruits suffer a reduced risk of parasitism since endoparasitoid wasps that parasitize larvae are strongly repelled by the smell of citrus, as well as by valencene. The chain is Odorant receptor 19a (Or19a) from Drosophila melanogaster (Fruit fly).